The chain runs to 183 residues: Dual-action ribosomal maturation protein DarP (183 aa).

It belongs to the DarP family.

Its subcellular location is the cytoplasm. In terms of biological role, member of a network of 50S ribosomal subunit biogenesis factors which assembles along the 30S-50S interface, preventing incorrect 23S rRNA structures from forming. Promotes peptidyl transferase center (PTC) maturation. In Shigella flexneri serotype 5b (strain 8401), this protein is Dual-action ribosomal maturation protein DarP.